The sequence spans 369 residues: Aminomethyltransferase (369 aa).

The protein belongs to the GcvT family. The glycine cleavage system is composed of four proteins: P, T, L and H.

The enzyme catalyses N(6)-[(R)-S(8)-aminomethyldihydrolipoyl]-L-lysyl-[protein] + (6S)-5,6,7,8-tetrahydrofolate = N(6)-[(R)-dihydrolipoyl]-L-lysyl-[protein] + (6R)-5,10-methylene-5,6,7,8-tetrahydrofolate + NH4(+). The glycine cleavage system catalyzes the degradation of glycine. The protein is Aminomethyltransferase of Xanthomonas euvesicatoria pv. vesicatoria (strain 85-10) (Xanthomonas campestris pv. vesicatoria).